Here is a 569-residue protein sequence, read N- to C-terminus: 3-(3-hydroxy-phenyl)propionate/3-hydroxycinnamic acid hydroxylase (569 aa).

Residues 12–41 (DVVV…VVDE) and 277–287 (FRKGRLMLAGD) contribute to the FAD site.

It belongs to the PheA/TfdB FAD monooxygenase family. FAD is required as a cofactor.

The enzyme catalyses 3-(3-hydroxyphenyl)propanoate + NADH + O2 + H(+) = 3-(2,3-dihydroxyphenyl)propanoate + NAD(+) + H2O. It catalyses the reaction (2E)-3-(3-hydroxyphenyl)prop-2-enoate + NADH + O2 + H(+) = (2E)-3-(2,3-dihydroxyphenyl)prop-2-enoate + NAD(+) + H2O. It participates in aromatic compound metabolism; 3-phenylpropanoate degradation. In terms of biological role, catalyzes the insertion of one atom of molecular oxygen into position 2 of the phenyl ring of 3-(3-hydroxyphenyl)propionate (3-HPP) and hydroxycinnamic acid (3HCI). In Mycolicibacterium vanbaalenii (strain DSM 7251 / JCM 13017 / BCRC 16820 / KCTC 9966 / NRRL B-24157 / PYR-1) (Mycobacterium vanbaalenii), this protein is 3-(3-hydroxy-phenyl)propionate/3-hydroxycinnamic acid hydroxylase.